The primary structure comprises 91 residues: Small ribosomal subunit protein uS19 (91 aa).

The tract at residues 72-91 (GEFSPTRKFGGHGDDKKKKK) is disordered. Residues 82 to 91 (GHGDDKKKKK) show a composition bias toward basic and acidic residues.

Belongs to the universal ribosomal protein uS19 family.

Functionally, protein S19 forms a complex with S13 that binds strongly to the 16S ribosomal RNA. The polypeptide is Small ribosomal subunit protein uS19 (Spiroplasma kunkelii).